A 493-amino-acid polypeptide reads, in one-letter code: Glutamyl-tRNA(Gln) amidotransferase subunit A (493 aa).

Active-site charge relay system residues include Lys-79 and Ser-159. The Acyl-ester intermediate role is filled by Ser-183.

Belongs to the amidase family. GatA subfamily. In terms of assembly, heterotrimer of A, B and C subunits.

The enzyme catalyses L-glutamyl-tRNA(Gln) + L-glutamine + ATP + H2O = L-glutaminyl-tRNA(Gln) + L-glutamate + ADP + phosphate + H(+). In terms of biological role, allows the formation of correctly charged Gln-tRNA(Gln) through the transamidation of misacylated Glu-tRNA(Gln) in organisms which lack glutaminyl-tRNA synthetase. The reaction takes place in the presence of glutamine and ATP through an activated gamma-phospho-Glu-tRNA(Gln). This Brucella suis biovar 1 (strain 1330) protein is Glutamyl-tRNA(Gln) amidotransferase subunit A.